A 156-amino-acid polypeptide reads, in one-letter code: Transcription antitermination protein NusB (156 aa).

The protein belongs to the NusB family.

Functionally, involved in transcription antitermination. Required for transcription of ribosomal RNA (rRNA) genes. Binds specifically to the boxA antiterminator sequence of the ribosomal RNA (rrn) operons. The polypeptide is Transcription antitermination protein NusB (Bartonella quintana (strain Toulouse) (Rochalimaea quintana)).